A 515-amino-acid chain; its full sequence is GMP synthase [glutamine-hydrolyzing] (515 aa).

Positions 6 to 198 (KVIIIDYGSQ…LFHVAKLKAD (193 aa)) constitute a Glutamine amidotransferase type-1 domain. Cys-83 acts as the Nucleophile in catalysis. Catalysis depends on residues His-172 and Glu-174. Residues 199 to 390 (WTMSSFVERA…LGLPDFIIWR (192 aa)) enclose the GMPS ATP-PPase domain. 226-232 (SGGIDST) is a binding site for ATP.

In terms of assembly, homodimer.

The enzyme catalyses XMP + L-glutamine + ATP + H2O = GMP + L-glutamate + AMP + diphosphate + 2 H(+). Its pathway is purine metabolism; GMP biosynthesis; GMP from XMP (L-Gln route): step 1/1. Functionally, catalyzes the synthesis of GMP from XMP. In Nitratidesulfovibrio vulgaris (strain DP4) (Desulfovibrio vulgaris), this protein is GMP synthase [glutamine-hydrolyzing].